Here is a 208-residue protein sequence, read N- to C-terminus: Small ribosomal subunit protein uS4 (208 aa).

The S4 RNA-binding domain maps to 95–159 (RRIDNIVYRA…FKKLVRSNIE (65 aa)).

It belongs to the universal ribosomal protein uS4 family. Part of the 30S ribosomal subunit. Contacts protein S5. The interaction surface between S4 and S5 is involved in control of translational fidelity.

In terms of biological role, one of the primary rRNA binding proteins, it binds directly to 16S rRNA where it nucleates assembly of the body of the 30S subunit. With S5 and S12 plays an important role in translational accuracy. This Borrelia recurrentis (strain A1) protein is Small ribosomal subunit protein uS4.